The following is a 157-amino-acid chain: Protein Smg (157 aa).

The protein belongs to the Smg family.

This chain is Protein Smg, found in Sodalis glossinidius (strain morsitans).